The primary structure comprises 126 residues: Large ribosomal subunit protein uL22 (126 aa).

The protein belongs to the universal ribosomal protein uL22 family. In terms of assembly, part of the 50S ribosomal subunit.

Functionally, this protein binds specifically to 23S rRNA; its binding is stimulated by other ribosomal proteins, e.g. L4, L17, and L20. It is important during the early stages of 50S assembly. It makes multiple contacts with different domains of the 23S rRNA in the assembled 50S subunit and ribosome. In terms of biological role, the globular domain of the protein is located near the polypeptide exit tunnel on the outside of the subunit, while an extended beta-hairpin is found that lines the wall of the exit tunnel in the center of the 70S ribosome. The chain is Large ribosomal subunit protein uL22 from Bradyrhizobium sp. (strain BTAi1 / ATCC BAA-1182).